Here is a 212-residue protein sequence, read N- to C-terminus: Thymidylate kinase (212 aa).

Gly-11–Ser-18 provides a ligand contact to ATP.

This sequence belongs to the thymidylate kinase family.

The catalysed reaction is dTMP + ATP = dTDP + ADP. Functionally, phosphorylation of dTMP to form dTDP in both de novo and salvage pathways of dTTP synthesis. This chain is Thymidylate kinase, found in Streptococcus gordonii (strain Challis / ATCC 35105 / BCRC 15272 / CH1 / DL1 / V288).